We begin with the raw amino-acid sequence, 428 residues long: MTIVEDAKKGIITEEMKIVAKDEGLDPEFIRRGIAAGRIVIPTSPYRQVKLCGLGEGLRTKINASIGVSSDIVDDEMEVKKAIAAEKAGADTLMELGTGGDFLGIRKKVIDSISLSVGSVPLYQAFIEAARKYGSIVHMTEDELFKATEDQAKLGTNFMAIHTGVNNITLDRLKAHGRYGGLCSRGGAFMSAWMMHNEKENPLYSQFDYLVEILKEHEVVLSTGNGMRAGATHDATDRAQIQELIINTELGQRAHDAGLQVIIEGPGHIPLDQIETNVKIMKEMSGHKPFYMLGPLATDIAPGYDHIVTAIGASLSASYGCDFLCYVTPAEHLALPNIEDVITGVKTSKIAAHIGDMVKYPERARQWDLDMGRARRDLDWEKMYSLALDPEHARAVRNSRAPEDSDACTMCGNFCALKIVNQNYNLAK.

Residues Met-94, Tyr-123, His-162, 184 to 186 (SRG), 225 to 228 (NGMR), and Glu-264 contribute to the substrate site. His-268 serves as a coordination point for Zn(2+). Tyr-291 is a substrate binding site. His-332 serves as a coordination point for Zn(2+). Positions 408, 411, and 415 each coordinate [4Fe-4S] cluster.

Belongs to the ThiC family. The cofactor is [4Fe-4S] cluster.

The enzyme catalyses 5-amino-1-(5-phospho-beta-D-ribosyl)imidazole + S-adenosyl-L-methionine = 4-amino-2-methyl-5-(phosphooxymethyl)pyrimidine + CO + 5'-deoxyadenosine + formate + L-methionine + 3 H(+). It participates in cofactor biosynthesis; thiamine diphosphate biosynthesis. Its function is as follows. Catalyzes the synthesis of the hydroxymethylpyrimidine phosphate (HMP-P) moiety of thiamine from aminoimidazole ribotide (AIR) in a radical S-adenosyl-L-methionine (SAM)-dependent reaction. This Methanosarcina mazei (strain ATCC BAA-159 / DSM 3647 / Goe1 / Go1 / JCM 11833 / OCM 88) (Methanosarcina frisia) protein is Phosphomethylpyrimidine synthase 2.